The following is a 332-amino-acid chain: Aquaporin Lacbi1:317173 (332 aa).

The span at 1–20 (MSGQHQITEQSSRNPLSRVS) shows a compositional bias: polar residues. The segment at 1 to 45 (MSGQHQITEQSSRNPLSRVSTLLPEKPLSPTSTYAGTQKHPEAPR) is disordered. The Cytoplasmic segment spans residues 1–66 (MSGQHQITEQ…RNAIRKPMAE (66 aa)). A helical transmembrane segment spans residues 67-87 (FFGVALLIIFGAGSACQVVLS). The Extracellular portion of the chain corresponds to 88-100 (TNPDVASSARGSF). A helical membrane pass occupies residues 101 to 121 (LSINFGWAIGIAMGVWVSGGI). Topologically, residues 122–144 (SGGHINPAITIAMATYRGFPWRK) are cytoplasmic. An NPA 1 motif is present at residues 127 to 129 (NPA). A helical transmembrane segment spans residues 145-165 (VPSYILAQVLGGVVGAGLVYA). Over 166-199 (NYIHAIDIFEGGHHIRTQATASLFATYALPYMTQ) the chain is Extracellular. A helical transmembrane segment spans residues 200–220 (ASCFFSEFLATAVLSMMVFAL). Topologically, residues 221 to 230 (TDKRNHSPTN) are cytoplasmic. The chain crosses the membrane as a helical span at residues 231–251 (GLLPFALFILFVGLGASLGME). Over 252-283 (TAYALNPARDFGPRLFLAMAGYGKALFNYRSQ) the chain is Extracellular. Positions 257-259 (NPA) match the NPA 2 motif. Residues 284 to 304 (YWLWAPIIAPVLGAQAGGLLY) traverse the membrane as a helical segment. Residues 305 to 332 (DTFLNDGDNSPIKWRCASSQEHQLAEVV) lie on the Cytoplasmic side of the membrane.

Belongs to the MIP/aquaporin (TC 1.A.8) family.

The protein resides in the membrane. It catalyses the reaction H2O(in) = H2O(out). The enzyme catalyses NH4(+)(in) = NH4(+)(out). Functionally, water channel required to facilitate the transport of water across membranes. Acts as the most efficient Laccaria water channel. In addition to water, also shows strong ammonium transport activity. May be involved in fungal nitrogen (ammonium) support of the plant host in symbiosis. This Laccaria bicolor (strain S238N-H82 / ATCC MYA-4686) (Bicoloured deceiver) protein is Aquaporin Lacbi1:317173.